Here is a 215-residue protein sequence, read N- to C-terminus: UPF0502 protein Ping_1905 (215 aa).

This sequence belongs to the UPF0502 family.

In Psychromonas ingrahamii (strain DSM 17664 / CCUG 51855 / 37), this protein is UPF0502 protein Ping_1905.